The following is a 181-amino-acid chain: ATP-dependent protease subunit HslV (181 aa).

The active site involves Thr7. The Na(+) site is built by Gly166, Cys169, and Thr172.

It belongs to the peptidase T1B family. HslV subfamily. As to quaternary structure, a double ring-shaped homohexamer of HslV is capped on each side by a ring-shaped HslU homohexamer. The assembly of the HslU/HslV complex is dependent on binding of ATP.

It localises to the cytoplasm. The catalysed reaction is ATP-dependent cleavage of peptide bonds with broad specificity.. With respect to regulation, allosterically activated by HslU binding. Protease subunit of a proteasome-like degradation complex believed to be a general protein degrading machinery. The protein is ATP-dependent protease subunit HslV of Variovorax paradoxus (strain S110).